The primary structure comprises 337 residues: Inositol 2-dehydrogenase (337 aa).

The protein belongs to the Gfo/Idh/MocA family. Homotetramer.

It catalyses the reaction myo-inositol + NAD(+) = scyllo-inosose + NADH + H(+). In terms of biological role, involved in the oxidation of myo-inositol (MI) to 2-keto-myo-inositol (2KMI or 2-inosose). This chain is Inositol 2-dehydrogenase, found in Burkholderia lata (strain ATCC 17760 / DSM 23089 / LMG 22485 / NCIMB 9086 / R18194 / 383).